A 430-amino-acid chain; its full sequence is Adenylosuccinate synthetase (430 aa).

GTP-binding positions include 12-18 and 40-42; these read GDEGKGK and GHT. The Proton acceptor role is filled by Asp13. Residues Asp13 and Gly40 each coordinate Mg(2+). Residues 13–16, 38–41, Thr128, Arg142, Gln223, Thr238, and Arg302 each bind IMP; these read DEGK and NAGH. The active-site Proton donor is the His41. 298–304 lines the substrate pocket; it reads TTTGRPR. GTP contacts are provided by residues Arg304, 330–332, and 413–415; these read SID and SVG.

This sequence belongs to the adenylosuccinate synthetase family. As to quaternary structure, homodimer. The cofactor is Mg(2+).

It is found in the cytoplasm. It carries out the reaction IMP + L-aspartate + GTP = N(6)-(1,2-dicarboxyethyl)-AMP + GDP + phosphate + 2 H(+). Its pathway is purine metabolism; AMP biosynthesis via de novo pathway; AMP from IMP: step 1/2. Its function is as follows. Plays an important role in the de novo pathway of purine nucleotide biosynthesis. Catalyzes the first committed step in the biosynthesis of AMP from IMP. The chain is Adenylosuccinate synthetase from Lactococcus lactis subsp. cremoris (strain MG1363).